Consider the following 162-residue polypeptide: Precursor protein UG (162 aa).

The signal sequence occupies residues 1–19 (MERILLCFIVATLVAISMA). The propeptide occupies 20–23 (NPRP). 2 cysteine pairs are disulfide-bonded: Cys-30-Cys-42 and Cys-33-Cys-49. The propeptide occupies 56–59 (VPKP). Disulfide bonds link Cys-66/Cys-78 and Cys-69/Cys-85. Positions 92-95 (VPKP) are excised as a propeptide. 2 cysteine pairs are disulfide-bonded: Cys-102-Cys-114 and Cys-105-Cys-121. Positions 128 to 131 (VPKP) are excised as a propeptide. Disulfide bonds link Cys-138-Cys-150 and Cys-141-Cys-157.

It belongs to the sea anemone BBH family.

It localises to the secreted. The protein localises to the nematocyst. Affects the ASIC3 channel (ACCN3) and produces analgesic effects. It produces a reversible inhibition effect on both the transient and the sustained current of human ASIC3 channels expressed in X.laevis oocytes. It completely blocks the transient component (IC(50)=10 uM) and partially (48%) inhibits the amplitude of the sustained component (IC(50)=1.44 uM). Using in vivo tests in mice, it reverses inflammatory and acid-induced pain. Its function is as follows. Does not affect the ASIC3 channel. Does not cause lethality or paralysis of noble crayfish (A.astacus) at a dose of 1 mg/kg. This Urticina grebelnyi (Painted anemone) protein is Precursor protein UG.